The primary structure comprises 431 residues: MKNYIEIIDVSARQVLDSRSNPTVEVDVILEDGTTGRAAVPSGASTGIFEAVELRDGDKSVYNGKGVLKAIENVNTIIAEELVGMNVLDQIAIDKTMIELDGTDNKGKLGANAMLGVSLACAKAAAEYLGLSLYQYIGGVNAKVLPVPMMNIINGGEHADNNVDLQEFMIMPAGASSFSEALRMCSEVYHSLKSLLKAKGYDTGVGDEGGFAPNLNSNEEAIQVIVEAIEKAGYKPGVEIFIALDPASSEIFEDGKYNLKGEGKVLTPQEMVDYYANLVAKYPIISIEDGMAEEDWEGWRLITERLGTKIQLVGDDLFVTNTDRLTMGIERGVANSILIKLNQIGTLTETLNAIEMAERAGYTAVVSHRSGETEDTTIADLVVAVNAGQIKTGAPARSERVAKYNQLLRIEDELGEMGEYRGLKAFYNIKK.

A (2R)-2-phosphoglycerate-binding site is contributed by Gln-166. The Proton donor role is filled by Glu-208. Asp-245, Glu-288, and Asp-315 together coordinate Mg(2+). Positions 340, 369, 370, and 391 each coordinate (2R)-2-phosphoglycerate. Catalysis depends on Lys-340, which acts as the Proton acceptor.

It belongs to the enolase family. It depends on Mg(2+) as a cofactor.

It localises to the cytoplasm. Its subcellular location is the secreted. The protein localises to the cell surface. The enzyme catalyses (2R)-2-phosphoglycerate = phosphoenolpyruvate + H2O. The protein operates within carbohydrate degradation; glycolysis; pyruvate from D-glyceraldehyde 3-phosphate: step 4/5. Functionally, catalyzes the reversible conversion of 2-phosphoglycerate (2-PG) into phosphoenolpyruvate (PEP). It is essential for the degradation of carbohydrates via glycolysis. The sequence is that of Enolase from Clostridium tetani (strain Massachusetts / E88).